A 254-amino-acid chain; its full sequence is Decaprenylphosphoryl-2-keto-beta-D-erythro-pentose reductase (254 aa).

An NAD(+)-binding site is contributed by aspartate 67. The active-site Proton acceptor is tyrosine 160. Lysine 164 provides a ligand contact to NAD(+).

This sequence belongs to the short-chain dehydrogenases/reductases (SDR) family. In terms of assembly, interacts with DprE1 to form an epimerase complex.

The protein localises to the periplasm. The enzyme catalyses trans,octa-cis-decaprenylphospho-beta-D-arabinofuranose + NAD(+) = trans,octa-cis-decaprenylphospho-beta-D-erythro-pentofuranosid-2-ulose + NADH + H(+). Its pathway is cell wall biogenesis; cell wall polysaccharide biosynthesis. Component of the DprE1-DprE2 complex that catalyzes the 2-step epimerization of decaprenyl-phospho-ribose (DPR) to decaprenyl-phospho-arabinose (DPA), a key precursor that serves as the arabinose donor required for the synthesis of cell-wall arabinans. DprE1 catalyzes the first step of epimerization, namely FAD-dependent oxidation of the C2' hydroxyl of DPR to yield the keto intermediate decaprenyl-phospho-2'-keto-D-arabinose (DPX). The intermediate DPX is then transferred to DprE2 subunit of the epimerase complex, most probably through a 'substrate channel' at the interface of DprE1-DprE2 complex. DprE2 then catalyzes the second step of epimerization, the NAD(+)-dependent reduction of DPX that leads to the formation of DPA. This is Decaprenylphosphoryl-2-keto-beta-D-erythro-pentose reductase from Mycobacterium bovis (strain ATCC BAA-935 / AF2122/97).